A 246-amino-acid chain; its full sequence is tRNA pseudouridine synthase A (246 aa).

Aspartate 51 acts as the Nucleophile in catalysis. Tyrosine 105 contributes to the substrate binding site.

Belongs to the tRNA pseudouridine synthase TruA family.

The catalysed reaction is uridine(38/39/40) in tRNA = pseudouridine(38/39/40) in tRNA. Functionally, formation of pseudouridine at positions 38, 39 and 40 in the anticodon stem and loop of transfer RNAs. The chain is tRNA pseudouridine synthase A from Thermoplasma volcanium (strain ATCC 51530 / DSM 4299 / JCM 9571 / NBRC 15438 / GSS1).